A 480-amino-acid chain; its full sequence is Endo-1,6-beta-D-glucanase (480 aa).

The signal sequence occupies residues 1-17 (MYPPALTLLLTPGLVAA). The N-linked (GlcNAc...) asparagine glycan is linked to asparagine 50. Glutamate 225 serves as the catalytic Proton donor. The active-site Nucleophile is the glutamate 321.

Belongs to the glycosyl hydrolase 30 family.

The protein resides in the secreted. The enzyme catalyses Random hydrolysis of (1-&gt;6)-linkages in (1-&gt;6)-beta-D-glucans.. In terms of biological role, partially degrades N.crassa cell wall beta-D-glucan, liberating small amounts of oligosaccharides. The polypeptide is Endo-1,6-beta-D-glucanase (neg-1) (Neurospora crassa (strain ATCC 24698 / 74-OR23-1A / CBS 708.71 / DSM 1257 / FGSC 987)).